A 211-amino-acid chain; its full sequence is Large ribosomal subunit protein bL9 (211 aa).

A disordered region spans residues 183–211 (AAASEDEELAETAGVAPAEPSEEDDSAKA). Residues 202 to 211 (PSEEDDSAKA) show a composition bias toward acidic residues.

Belongs to the bacterial ribosomal protein bL9 family.

Binds to the 23S rRNA. The protein is Large ribosomal subunit protein bL9 of Roseobacter denitrificans (strain ATCC 33942 / OCh 114) (Erythrobacter sp. (strain OCh 114)).